Reading from the N-terminus, the 292-residue chain is uncharacterized protein (292 aa).

A helical membrane pass occupies residues 17 to 37; the sequence is SMDMFFFLFIFLLFIYPEMMM.

This sequence to M.jannaschii MJ0137.

The protein localises to the membrane. This is an uncharacterized protein from Methanocaldococcus jannaschii (strain ATCC 43067 / DSM 2661 / JAL-1 / JCM 10045 / NBRC 100440) (Methanococcus jannaschii).